The primary structure comprises 527 residues: Putative ABC transporter peptide-binding protein BOV_A0352 (527 aa).

The first 23 residues, 1-23, serve as a signal peptide directing secretion; the sequence is MRLRNFYSALALSAAVFAGPLYA.

Belongs to the bacterial solute-binding protein 5 family. The complex is composed of two ATP-binding proteins (BOV_A0347 and BOV_A0348), two transmembrane proteins (BOV_A0350 and BOV_A0351) and a solute-binding protein (BOV_A0352).

Its subcellular location is the periplasm. Probably part of an ABC transporter complex that could be involved in peptide import. This Brucella ovis (strain ATCC 25840 / 63/290 / NCTC 10512) protein is Putative ABC transporter peptide-binding protein BOV_A0352.